We begin with the raw amino-acid sequence, 396 residues long: Elongation factor Tu (396 aa).

Residues 10 to 206 enclose the tr-type G domain; it reads KPHVNVGTIG…ALDTYIPLPE (197 aa). The interval 19–26 is G1; that stretch reads GHVDHGKT. 19-26 is a GTP binding site; sequence GHVDHGKT. Position 26 (Thr-26) interacts with Mg(2+). Positions 60 to 64 are G2; it reads GITIN. The tract at residues 81–84 is G3; the sequence is DCPG. GTP contacts are provided by residues 81–85 and 136–139; these read DCPGH and NKCD. Residues 136 to 139 are G4; it reads NKCD. The tract at residues 174-176 is G5; the sequence is SAK.

This sequence belongs to the TRAFAC class translation factor GTPase superfamily. Classic translation factor GTPase family. EF-Tu/EF-1A subfamily. Monomer.

Its subcellular location is the cytoplasm. It carries out the reaction GTP + H2O = GDP + phosphate + H(+). GTP hydrolase that promotes the GTP-dependent binding of aminoacyl-tRNA to the A-site of ribosomes during protein biosynthesis. This Polaromonas sp. (strain JS666 / ATCC BAA-500) protein is Elongation factor Tu.